The chain runs to 368 residues: tRNA-cytidine(32) 2-sulfurtransferase (368 aa).

Residues 95–100 carry the PP-loop motif motif; the sequence is SGGKDS. 3 residues coordinate [4Fe-4S] cluster: cysteine 170, cysteine 173, and cysteine 261.

The protein belongs to the TtcA family. In terms of assembly, homodimer. Mg(2+) serves as cofactor. [4Fe-4S] cluster is required as a cofactor.

Its subcellular location is the cytoplasm. It catalyses the reaction cytidine(32) in tRNA + S-sulfanyl-L-cysteinyl-[cysteine desulfurase] + AH2 + ATP = 2-thiocytidine(32) in tRNA + L-cysteinyl-[cysteine desulfurase] + A + AMP + diphosphate + H(+). Its pathway is tRNA modification. Catalyzes the ATP-dependent 2-thiolation of cytidine in position 32 of tRNA, to form 2-thiocytidine (s(2)C32). The sulfur atoms are provided by the cysteine/cysteine desulfurase (IscS) system. This chain is tRNA-cytidine(32) 2-sulfurtransferase, found in Psychrobacter sp. (strain PRwf-1).